Here is a 205-residue protein sequence, read N- to C-terminus: Octanoyltransferase (205 aa).

The 176-residue stretch at 30 to 205 folds into the BPL/LPL catalytic domain; that stretch reads NSADELVWLL…ILKKEFYKIF (176 aa). Substrate-binding positions include 68 to 75, 140 to 142, and 153 to 155; these read RGGKHTYH, AFG, and GIA. Catalysis depends on cysteine 171, which acts as the Acyl-thioester intermediate.

The protein belongs to the LipB family.

The protein resides in the cytoplasm. The enzyme catalyses octanoyl-[ACP] + L-lysyl-[protein] = N(6)-octanoyl-L-lysyl-[protein] + holo-[ACP] + H(+). Its pathway is protein modification; protein lipoylation via endogenous pathway; protein N(6)-(lipoyl)lysine from octanoyl-[acyl-carrier-protein]: step 1/2. Its function is as follows. Catalyzes the transfer of endogenously produced octanoic acid from octanoyl-acyl-carrier-protein onto the lipoyl domains of lipoate-dependent enzymes. Lipoyl-ACP can also act as a substrate although octanoyl-ACP is likely to be the physiological substrate. This chain is Octanoyltransferase, found in Wolbachia pipientis wMel.